Here is a 1068-residue protein sequence, read N- to C-terminus: MPPRPSSGELWGIHLMPPRILVECLLPNGMIVTLECLREATLVTIKHELFREARKYPLHQLLQDETSYIFVSVTQEAEREEFFDETRRLCDLRLFQPFLKVIEPVGNREEKILNREIGFVIGMPVCEFDMVKDPEVQDFRRNILNVCKEAVDLRDLNSPHSRAMYVYPPNVESSPELPKHIYNKLDKGQIIVVIWVIVSPNNDKQKYTLKINHDCVPEQVIAEAIRKKTRSMLLSSEQLKLCVLEYQGKYILKVCGCDEYFLEKYPLSQYKYIRSCIMLGRMPNLMLMAKESLYSQLPIDSFTMPSYSRRISTATPYMNGETSTKSLWVINSALRIKILCATYVNVNIRDIDKIYVRTGIYHGGEPLCDNVNTQRVPCSNPRWNEWLNYDIYIPDLPRAARLCLSICSVKGRKGAKEEHCPLAWGNINLFDYTDTLVSGKMALNLWPVPHGLEDLLNPIGVTGSNPNKETPCLELEFDWFSSVVKFPDMSVIEEHANWSVSREAGFSYSHTGLSNRLARDNELRENDKEQLRALCTRDPLSEITEQEKDFLWSHRHYCVTIPEILPKLLLSVKWNSRDEVAQMYCLVKDWPPIKPEQAMELLDCNYPDPMVRSFAVRCLEKYLTDDKLSQYLIQLVQVLKYEQYLDNLLVRFLLKKALTNQRIGHFFFWHLKSEMHNKTVSQRFGLLLESYCRACGMYLKHLNRQVEAMEKLINLTDILKQEKKDETQKVQMKFLVEQMRQPDFMDALQGFLSPLNPAHQLGNLRLEECRIMSSAKRPLWLNWENPDIMSELLFQNNEIIFKNGDDLRQDMLTLQIIRIMENIWQNQGLDLRMLPYGCLSIGDCVGLIEVVRNSHTIMQIQCKGGLKGALQFNSHTLHQWLKDKNKGEIYDAAIDLFTRSCAGYCVATFILGIGDRHNSNIMVKDDGQLFHIDFGHFLDHKKKKFGYKRERVPFVLTQDFLIVISKGAQEYTKTREFERFQEMCYKAYLAIRQHANLFINLFSMMLGSGMPELQSFDDIAYIRKTLALDKTEQEALEYFTKQMNDAHHGGWTTKMDWIFHTIKQHALN.

Residues 16 to 105 form the PI3K-ABD domain; that stretch reads MPPRILVECL…QPFLKVIEPV (90 aa). The PI3K-RBD domain maps to 187–289; the sequence is KGQIIVVIWV…GRMPNLMLMA (103 aa). Positions 330–487 constitute a C2 PI3K-type domain; it reads INSALRIKIL…DWFSSVVKFP (158 aa). Positions 517–694 constitute a PIK helical domain; that stretch reads LARDNELREN…GLLLESYCRA (178 aa). In terms of domain architecture, PI3K/PI4K catalytic spans 765–1051; it reads RLEECRIMSS…QMNDAHHGGW (287 aa). Residues 771 to 777 form a G-loop region; that stretch reads IMSSAKR. The tract at residues 912–920 is catalytic loop; sequence GIGDRHNSN. An activation loop region spans residues 931–957; that stretch reads HIDFGHFLDHKKKKFGYKRERVPFVLT.

This sequence belongs to the PI3/PI4-kinase family. As to quaternary structure, heterodimer of a catalytic subunit PIK3CA and a p85 regulatory subunit (PIK3R1, PIK3R2 or PIK3R3). Interacts with IRS1 in nuclear extracts. Interacts with RUFY3. Interacts with RASD2. Interacts with APPL1. Interacts with HRAS and KRAS. Interaction with HRAS/KRAS is required for PI3K pathway signaling and cell proliferation stimulated by EGF and FGF2. Interacts with FAM83B; activates the PI3K/AKT signaling cascade.

It catalyses the reaction a 1,2-diacyl-sn-glycero-3-phospho-(1D-myo-inositol-4,5-bisphosphate) + ATP = a 1,2-diacyl-sn-glycero-3-phospho-(1D-myo-inositol-3,4,5-trisphosphate) + ADP + H(+). It carries out the reaction a 1,2-diacyl-sn-glycero-3-phospho-(1D-myo-inositol) + ATP = a 1,2-diacyl-sn-glycero-3-phospho-(1D-myo-inositol-3-phosphate) + ADP + H(+). The enzyme catalyses L-seryl-[protein] + ATP = O-phospho-L-seryl-[protein] + ADP + H(+). The catalysed reaction is 1,2-dioctanoyl-sn-glycero-3-phospho-(1D-myo-inositol-4,5-bisphosphate) + ATP = 1,2-dioctanoyl-sn-glycero-3-phospho-(1D-myo-inositol-3,4,5-trisphosphate) + ADP + H(+). It catalyses the reaction 1-octadecanoyl-2-(5Z,8Z,11Z,14Z)-eicosatetraenoyl-sn-glycero-3-phospho-1D-myo-inositol 4,5-bisphosphate + ATP = 1-octadecanoyl-2-(5Z,8Z,11Z,14Z-eicosatetraenoyl)-sn-glycero-3-phospho-(1D-myo-inositol 3,4,5-triphosphate) + ADP + H(+). It participates in phospholipid metabolism; phosphatidylinositol phosphate biosynthesis. Functionally, phosphoinositide-3-kinase (PI3K) phosphorylates phosphatidylinositol (PI) and its phosphorylated derivatives at position 3 of the inositol ring to produce 3-phosphoinositides. Uses ATP and PtdIns(4,5)P2 (phosphatidylinositol 4,5-bisphosphate) to generate phosphatidylinositol 3,4,5-trisphosphate (PIP3). PIP3 plays a key role by recruiting PH domain-containing proteins to the membrane, including AKT1 and PDPK1, activating signaling cascades involved in cell growth, survival, proliferation, motility and morphology. Participates in cellular signaling in response to various growth factors. Involved in the activation of AKT1 upon stimulation by receptor tyrosine kinases ligands such as EGF, insulin, IGF1, VEGFA and PDGF. Involved in signaling via insulin-receptor substrate (IRS) proteins. Essential in endothelial cell migration during vascular development through VEGFA signaling, possibly by regulating RhoA activity. Required for lymphatic vasculature development, possibly by binding to RAS and by activation by EGF and FGF2, but not by PDGF. Regulates invadopodia formation through the PDPK1-AKT1 pathway. Participates in cardiomyogenesis in embryonic stem cells through a AKT1 pathway. Participates in vasculogenesis in embryonic stem cells through PDK1 and protein kinase C pathway. Also has serine-protein kinase activity: phosphorylates PIK3R1 (p85alpha regulatory subunit), EIF4EBP1 and HRAS. Plays a role in the positive regulation of phagocytosis and pinocytosis. This chain is Phosphatidylinositol 4,5-bisphosphate 3-kinase catalytic subunit alpha isoform (Pik3ca), found in Mus musculus (Mouse).